The following is a 297-amino-acid chain: Phosphoribosylaminoimidazole-succinocarboxamide synthase (297 aa).

Belongs to the SAICAR synthetase family.

The catalysed reaction is 5-amino-1-(5-phospho-D-ribosyl)imidazole-4-carboxylate + L-aspartate + ATP = (2S)-2-[5-amino-1-(5-phospho-beta-D-ribosyl)imidazole-4-carboxamido]succinate + ADP + phosphate + 2 H(+). It participates in purine metabolism; IMP biosynthesis via de novo pathway; 5-amino-1-(5-phospho-D-ribosyl)imidazole-4-carboxamide from 5-amino-1-(5-phospho-D-ribosyl)imidazole-4-carboxylate: step 1/2. In Mycobacterium sp. (strain KMS), this protein is Phosphoribosylaminoimidazole-succinocarboxamide synthase.